Reading from the N-terminus, the 906-residue chain is Cadherin-2A (906 aa).

The N-terminal stretch at 1 to 28 (MCRKEPFLLPTALCILAALVLHQGPVEA) is a signal peptide. Residues 29–160 (LGGSRLCKTG…KHNGLQRQKR (132 aa)) constitute a propeptide that is removed on maturation. Cadherin domains lie at 161–268 (DWVI…RPEF), 269–383 (LHQI…PPEF), 384–498 (TAMT…NPYF), 499–604 (TPNP…DNAP), and 605–714 (YVYP…TTAP). Residues 161 to 724 (DWVIPPINVP…IIGTGLGTGA (564 aa)) lie on the Extracellular side of the membrane. Ca(2+) is bound by residues Glu-171, Asp-227, Glu-229, Asp-260, Met-261, Asn-262, Asp-263, and Asn-264. N-linked (GlcNAc...) asparagine glycosylation occurs at Asn-274. Residues Asp-294, Asp-296, and Asn-302 each contribute to the Ca(2+) site. N-linked (GlcNAc...) asparagine glycosylation occurs at Asn-326. Asp-354 lines the Ca(2+) pocket. N-linked (GlcNAc...) asparagine glycans are attached at residues Asn-403, Asn-573, Asn-623, Asn-652, and Asn-693. A helical membrane pass occupies residues 725–746 (IIAILLCIIILLTLVLMFVVWM). Topologically, residues 747 to 906 (KRRDKERQAK…LADMYGGSDD (160 aa)) are cytoplasmic. Disordered regions lie at residues 775–800 (EEGGGEEDQDYDLSQLQQPDTVEPDT) and 863–884 (SGSTAGSLSSLNSSSSGGEQDY). Acidic residues predominate over residues 776–785 (EGGGEEDQDY). The segment covering 863-880 (SGSTAGSLSSLNSSSSGG) has biased composition (low complexity).

As to quaternary structure, homodimer (via extracellular region). Can also form heterodimers with other cadherins (via extracellular region). Dimerization occurs in trans, i.e. with a cadherin chain from another cell.

It is found in the cell membrane. The protein resides in the sarcolemma. The protein localises to the cell junction. It localises to the cell surface. Its subcellular location is the desmosome. It is found in the adherens junction. Functionally, calcium-dependent cell adhesion protein; preferentially mediates homotypic cell-cell adhesion. Cadherins may thus contribute to the sorting of heterogeneous cell types, and thereby play an important role during embryonic development. Required for proper neurite branching. Required for pre- and postsynaptic organization. The chain is Cadherin-2A (cdh2-a) from Xenopus laevis (African clawed frog).